A 348-amino-acid chain; its full sequence is Fructose-1,6-bisphosphatase (348 aa).

Residues 2–5 (PTLV) carry the Pro/N-degron motif. Ser12 bears the Phosphoserine mark. AMP contacts are provided by residues 27-31 (IIEHQ) and 38-42 (TGDFT). Positions 79 and 108 each coordinate Mg(2+). 122–123 (SY) provides a ligand contact to AMP. Mg(2+) contacts are provided by Asp128, Ile130, and Asp131. 131-134 (DGSS) is a binding site for substrate. Arg150 lines the AMP pocket. Substrate-binding positions include 222–225 (NEGN), 255–260 (RYVGSM), Tyr276, and 286–288 (KLR). Glu292 contacts Mg(2+).

It belongs to the FBPase class 1 family. Homotetramer. Requires Mg(2+) as cofactor. Ubiquitinated. Targeted for proteasomal degradation when cells are shifted to glucose-containing growth medium.

It carries out the reaction beta-D-fructose 1,6-bisphosphate + H2O = beta-D-fructose 6-phosphate + phosphate. It participates in carbohydrate biosynthesis; gluconeogenesis. Subject to complex allosteric regulation. The enzyme can assume an active R-state, or an inactive T-state. Intermediate conformations may exist. AMP acts as allosteric inhibitor. AMP binding affects the turnover of bound substrate and not the affinity for substrate. This Saccharomyces cerevisiae (strain ATCC 204508 / S288c) (Baker's yeast) protein is Fructose-1,6-bisphosphatase (FBP1).